Consider the following 119-residue polypeptide: Cysteine-rich DPF motif domain-containing protein 1 (119 aa).

Belongs to the CDPF1 family.

This Mus musculus (Mouse) protein is Cysteine-rich DPF motif domain-containing protein 1 (Cdpf1).